A 292-amino-acid chain; its full sequence is Cytidine deaminase (292 aa).

2 consecutive CMP/dCMP-type deaminase domains span residues 47–167 (TPLK…FGPK) and 186–292 (DHQD…YYSL). 88–90 (NQE) serves as a coordination point for substrate. Zn(2+) is bound at residue His-101. The Proton donor role is filled by Glu-103. Residues Cys-128 and Cys-131 each contribute to the Zn(2+) site.

The protein belongs to the cytidine and deoxycytidylate deaminase family. In terms of assembly, homodimer. Zn(2+) is required as a cofactor.

It carries out the reaction cytidine + H2O + H(+) = uridine + NH4(+). The catalysed reaction is 2'-deoxycytidine + H2O + H(+) = 2'-deoxyuridine + NH4(+). Its function is as follows. This enzyme scavenges exogenous and endogenous cytidine and 2'-deoxycytidine for UMP synthesis. This chain is Cytidine deaminase, found in Haemophilus influenzae (strain 86-028NP).